The sequence spans 311 residues: 4-hydroxy-tetrahydrodipicolinate synthase (311 aa).

Residue T51 participates in pyruvate binding. Catalysis depends on Y140, which acts as the Proton donor/acceptor. The active-site Schiff-base intermediate with substrate is K168. I209 serves as a coordination point for pyruvate.

It belongs to the DapA family. In terms of assembly, homotetramer; dimer of dimers.

Its subcellular location is the cytoplasm. It catalyses the reaction L-aspartate 4-semialdehyde + pyruvate = (2S,4S)-4-hydroxy-2,3,4,5-tetrahydrodipicolinate + H2O + H(+). It functions in the pathway amino-acid biosynthesis; L-lysine biosynthesis via DAP pathway; (S)-tetrahydrodipicolinate from L-aspartate: step 3/4. Functionally, catalyzes the condensation of (S)-aspartate-beta-semialdehyde [(S)-ASA] and pyruvate to 4-hydroxy-tetrahydrodipicolinate (HTPA). In Streptococcus pneumoniae (strain Taiwan19F-14), this protein is 4-hydroxy-tetrahydrodipicolinate synthase.